The primary structure comprises 89 residues: Large ribosomal subunit protein bL27 (89 aa).

Residues 1–23 (MAHKKAGGSSRNGRDSESKRLGV) are disordered.

It belongs to the bacterial ribosomal protein bL27 family.

The protein is Large ribosomal subunit protein bL27 of Rhizobium meliloti (strain 1021) (Ensifer meliloti).